The sequence spans 288 residues: RELT-like protein 1 (288 aa).

Residues 1-23 (MAPPAASGIPSIAPSLGPTAVWL) form the signal peptide. At 24–57 (GNRSDLGDVQALASRDLPTTTVTAGNNNKPEHLE) the chain is on the extracellular side. The N-linked (GlcNAc...) asparagine glycan is linked to Asn25. The chain crosses the membrane as a helical span at residues 58-78 (YVAFVLVPVFFIMGLLGILIC). Topologically, residues 79–288 (HVLKKKGYRC…EGTQERRSSE (210 aa)) are cytoplasmic. Disordered regions lie at residues 145 to 172 (FEPE…GAAS) and 237 to 288 (HKSN…RSSE). The segment covering 152–172 (SPNAPGSPTSPGSPLSPGAAS) has biased composition (low complexity). Basic and acidic residues predominate over residues 237-246 (HKSNSKERKS).

The protein belongs to the RELT family.

The protein resides in the cell membrane. In Gallus gallus (Chicken), this protein is RELT-like protein 1 (RELL1).